The chain runs to 99 residues: METLTFQFPAAEPGRGRTLVGCVSSGDLEVLMEPGTAGSLNIQVVTSVNGSGARWEQLFQRLFQGRTWPAVNIDIHDFGATPGVVRLRLEQGFEEIAHD.

O-(phosphoribosyl dephospho-coenzyme A)serine is present on Ser-25.

It belongs to the MdcC family. Post-translationally, covalently binds the prosthetic group of malonate decarboxylase.

It localises to the cytoplasm. Functionally, subunit of malonate decarboxylase, it is an acyl carrier protein to which acetyl and malonyl thioester residues are bound via a 2'-(5''-phosphoribosyl)-3'-dephospho-CoA prosthetic group and turn over during the catalytic mechanism. In Pseudomonas putida (strain W619), this protein is Malonate decarboxylase acyl carrier protein.